Here is a 137-residue protein sequence, read N- to C-terminus: NADH-quinone oxidoreductase subunit A (137 aa).

Helical transmembrane passes span W12 to S32, F66 to W86, and T96 to F116.

This sequence belongs to the complex I subunit 3 family. In terms of assembly, NDH-1 is composed of 13 different subunits. Subunits NuoA, H, J, K, L, M, N constitute the membrane sector of the complex.

It localises to the cell inner membrane. The catalysed reaction is a quinone + NADH + 5 H(+)(in) = a quinol + NAD(+) + 4 H(+)(out). In terms of biological role, NDH-1 shuttles electrons from NADH, via FMN and iron-sulfur (Fe-S) centers, to quinones in the respiratory chain. The immediate electron acceptor for the enzyme in this species is believed to be ubiquinone. Couples the redox reaction to proton translocation (for every two electrons transferred, four hydrogen ions are translocated across the cytoplasmic membrane), and thus conserves the redox energy in a proton gradient. This Pseudomonas fluorescens (strain Pf0-1) protein is NADH-quinone oxidoreductase subunit A.